The primary structure comprises 255 residues: Increased copper sensitivity protein 2 (255 aa).

A compositionally biased stretch (basic and acidic residues) spans Met-1–Ile-12. Disordered regions lie at residues Met-1 to Gly-32 and Pro-82 to His-142. The segment covering Ser-13–Ser-30 has biased composition (polar residues). The segment covering Ser-131–His-142 has biased composition (basic residues). Ser-217 is modified (phosphoserine).

This is Increased copper sensitivity protein 2 (ICS2) from Saccharomyces cerevisiae (strain ATCC 204508 / S288c) (Baker's yeast).